The sequence spans 1036 residues: Phytosulfokine receptor 2 (1036 aa).

Residues 1 to 16 (MVIILLLVFFVGSSVS) form the signal peptide. Residues Asn-36 and Asn-45 are each glycosylated (N-linked (GlcNAc...) asparagine). LRR repeat units lie at residues 89–111 (ELRVLDLSRNQLKGEVPAEISKL), 113–136 (QLQVLDLSHNLLSGSVLGVVSGLK), 137–159 (LIQSLNISSNSLSGKLSDVGVFP), 160–182 (GLVMLNVSNNLFEGEIHPELCSS), 185–207 (GIQVLDLSMNRLVGNLDGLYNCS), 209–231 (SIQQLHIDSNRLTGQLPDYLYSI), 233–256 (ELEQLSLSGNYLSGELSKNLSNLS), 257–279 (GLKSLLISENRFSDVIPDVFGNL), 281–303 (QLEHLDVSSNKFSGRFPPSLSQC), 305–326 (KLRVLDLRNNSLSGSINLNFTG), 329–351 (DLCVLDLASNHFSGPLPDSLGHC), 353–375 (KMKILSLAKNEFRGKIPDTFKNL), 377–398 (SLLFLSLSNNSFVDFSETMNVL), 403–423 (NLSTLILSKNFIGEEIPNNVT), 427–450 (NLAILALGNCGLRGQIPSWLLNCK), 451–473 (KLEVLDLSWNHFYGTIPHWIGKM), and 475–498 (SLFYIDFSNNTLTGAIPVAITELK). Asn-142, Asn-165, and Asn-205 each carry an N-linked (GlcNAc...) asparagine glycan. 3 N-linked (GlcNAc...) asparagine glycosylation sites follow: Asn-251, Asn-254, and Asn-278. Residues Asn-313 and Asn-323 are each glycosylated (N-linked (GlcNAc...) asparagine). Asn-385, Asn-403, and Asn-421 each carry an N-linked (GlcNAc...) asparagine glycan. 5 N-linked (GlcNAc...) asparagine glycosylation sites follow: Asn-483, Asn-504, Asn-523, Asn-549, and Asn-571. 2 LRR repeats span residues 561–583 (ELHMLDLSRNNFTGTIPDSISGL) and 585–606 (NLEVLDLSYNHLYGSIPLSFQS). Residues 680–700 (IVVLTISLAIGITLLLSVILL) form a helical membrane-spanning segment. Thr-751 carries the post-translational modification Phosphothreonine. Positions 754 to 1025 (FSQANIIGCG…PLIEEVVTWL (272 aa)) constitute a Protein kinase domain. Residues 760–768 (IGCGGFGLV) and Lys-782 each bind ATP. Tyr-827 and Tyr-867 each carry phosphotyrosine. Residue Asp-880 is the Proton acceptor of the active site. Residue Tyr-922 is modified to Phosphotyrosine. The stretch at 995-1020 (RTVLEMLEIACKCIDHEPRRRPLIEE) is one LRR 20 repeat.

This sequence belongs to the protein kinase superfamily. Ser/Thr protein kinase family.

Its subcellular location is the cell membrane. The catalysed reaction is L-seryl-[protein] + ATP = O-phospho-L-seryl-[protein] + ADP + H(+). It carries out the reaction L-threonyl-[protein] + ATP = O-phospho-L-threonyl-[protein] + ADP + H(+). Its function is as follows. Phytosulfokine receptor with a serine/threonine-protein kinase activity. This is Phytosulfokine receptor 2 (PSKR2) from Arabidopsis thaliana (Mouse-ear cress).